Here is a 114-residue protein sequence, read N- to C-terminus: Replication initiation control protein YabA (114 aa).

Residues His-84, Cys-86, Cys-102, and Cys-105 each contribute to the Zn(2+) site.

Belongs to the YabA family. In terms of assembly, homotetramer. Interacts with both DnaA and DnaN, acting as a bridge between these two proteins. The cofactor is Zn(2+).

It is found in the cytoplasm. It localises to the nucleoid. Functionally, involved in control of chromosome replication initiation. Inhibits the cooperative binding of DnaA to the oriC region, thus negatively regulating initiation of chromosome replication. Inhibits the ability of DnaA-ATP to form a helix on DNA; does not disassemble preformed DnaA-DNA helices. Decreases the residence time of DnaA on the chromosome at its binding sites (oriC, replication forks and promoter-binding sites). Tethers DnaA to the replication machinery via the DNA polymerase beta sliding clamp subunit (dnaN). Associates with oriC and other DnaA targets on the chromosome in a DnaA-dependent manner. The polypeptide is Replication initiation control protein YabA (Ligilactobacillus salivarius (strain UCC118) (Lactobacillus salivarius)).